A 510-amino-acid chain; its full sequence is Probable cytochrome P450 312a1 (510 aa).

Cysteine 455 contributes to the heme binding site.

Belongs to the cytochrome P450 family. Requires heme as cofactor.

Its subcellular location is the endoplasmic reticulum membrane. The protein localises to the microsome membrane. Functionally, may be involved in the metabolism of insect hormones and in the breakdown of synthetic insecticides. The protein is Probable cytochrome P450 312a1 (Cyp312a1) of Drosophila melanogaster (Fruit fly).